The following is a 145-amino-acid chain: D-aminoacyl-tRNA deacylase (145 aa).

Positions Gly137 to Pro138 match the Gly-cisPro motif, important for rejection of L-amino acids motif.

Belongs to the DTD family. Homodimer.

The protein resides in the cytoplasm. The enzyme catalyses glycyl-tRNA(Ala) + H2O = tRNA(Ala) + glycine + H(+). It catalyses the reaction a D-aminoacyl-tRNA + H2O = a tRNA + a D-alpha-amino acid + H(+). In terms of biological role, an aminoacyl-tRNA editing enzyme that deacylates mischarged D-aminoacyl-tRNAs. Also deacylates mischarged glycyl-tRNA(Ala), protecting cells against glycine mischarging by AlaRS. Acts via tRNA-based rather than protein-based catalysis; rejects L-amino acids rather than detecting D-amino acids in the active site. By recycling D-aminoacyl-tRNA to D-amino acids and free tRNA molecules, this enzyme counteracts the toxicity associated with the formation of D-aminoacyl-tRNA entities in vivo and helps enforce protein L-homochirality. The protein is D-aminoacyl-tRNA deacylase of Pseudoalteromonas translucida (strain TAC 125).